A 153-amino-acid chain; its full sequence is Virion assembly protein OPG100 (153 aa).

This sequence belongs to the orthopoxvirus OPG100 family. As to quaternary structure, homodimer. Part of a complex composed of the kinase OPG054, OPG092, OPG114, OPG115, OPG142 and OPG157. Interacts with OPG175.

The protein localises to the virion. It localises to the host cytoplasm. Its function is as follows. Late protein which is a part of a large complex required for early virion morphogenesis. This complex participates in the formation of virosomes and the incorporation of virosomal contents into nascent immature virions. Plays a role in DNA packaging during immature virions (IV) formation. The protein is Virion assembly protein OPG100 (OPG100) of Vaccinia virus (strain Western Reserve) (VACV).